The chain runs to 716 residues: MIYQSPTIQVELLEDNIAKLCFNAQGSVNKFDRETIASLDAALDSIKQNTNIKALLLTSAKSTFIVGADITEFLTLFQQDDATLLAWVEQANAVFNKLEDLPFPTASAINGFALGGGCETILATDLRVADTNARIGLPETKLGLIPGFGGTVRLPRVIGADNALEWITTAKDQRPEDALKVGAIDAVVAPENLEAAAIQMLHDALNGSLDWQARRTKKQSPLQLPKLEAMMSFATAKGMVFSVAGKHYPAPMAAVNVVEQAAGLDRDGALKVEALAFIKLAKTDVAQALIGIFLNDQFVKGKAKKAGKLAKDVNQAAVLGAGIMGGGIAYQSASKGTPIVMKDIAQPALELGLNEAAKILTTQVARGRSTPEKMAKVLNNITPSLDYAAIKNSDIVVEAVVEHPKVKATVLAEVEGYVSEDAIIASNTSTISINLLAKSLKKPERFCGMHFFNPVHKMPLVEIIRGEHSSEETIATVVAYASKMGKTPIVVNDCPGFFVNRVLFPYFAGFSGLLAEGADFAAVDKVMEKQFGWPMGPAYLLDVVGLDTGHHAQAVMAEGFPDRMGKNGKDAIDIMFENKRLGQKNTKGFYAYSVDRRGKPKKDIDPTSYELLSAEFGELKAFESDDIIARCMIPMIIETVRCLEEGIIASPAEGDMGLVYGIGFPPFRGGVFRYLDTMGVANFVALADKYAHLGGLYQVTDAMRALAANNGSYYQA.

The tract at residues 1 to 189 (MIYQSPTIQV…KVGAIDAVVA (189 aa)) is enoyl-CoA hydratase/isomerase. Asp-296 is a substrate binding site. The segment at 311 to 716 (KDVNQAAVLG…AANNGSYYQA (406 aa)) is 3-hydroxyacyl-CoA dehydrogenase. NAD(+) contacts are provided by residues Met-324, Asp-343, 400–402 (VVE), Lys-407, and Ser-429. Residue His-450 is the For 3-hydroxyacyl-CoA dehydrogenase activity of the active site. Residue Asn-453 participates in NAD(+) binding. Positions 500 and 660 each coordinate substrate.

This sequence in the N-terminal section; belongs to the enoyl-CoA hydratase/isomerase family. The protein in the C-terminal section; belongs to the 3-hydroxyacyl-CoA dehydrogenase family. As to quaternary structure, heterotetramer of two alpha chains (FadB) and two beta chains (FadA).

It catalyses the reaction a (3S)-3-hydroxyacyl-CoA + NAD(+) = a 3-oxoacyl-CoA + NADH + H(+). The enzyme catalyses a (3S)-3-hydroxyacyl-CoA = a (2E)-enoyl-CoA + H2O. The catalysed reaction is a 4-saturated-(3S)-3-hydroxyacyl-CoA = a (3E)-enoyl-CoA + H2O. It carries out the reaction (3S)-3-hydroxybutanoyl-CoA = (3R)-3-hydroxybutanoyl-CoA. It catalyses the reaction a (3Z)-enoyl-CoA = a 4-saturated (2E)-enoyl-CoA. The enzyme catalyses a (3E)-enoyl-CoA = a 4-saturated (2E)-enoyl-CoA. It participates in lipid metabolism; fatty acid beta-oxidation. Its function is as follows. Involved in the aerobic and anaerobic degradation of long-chain fatty acids via beta-oxidation cycle. Catalyzes the formation of 3-oxoacyl-CoA from enoyl-CoA via L-3-hydroxyacyl-CoA. It can also use D-3-hydroxyacyl-CoA and cis-3-enoyl-CoA as substrate. This Shewanella frigidimarina (strain NCIMB 400) protein is Fatty acid oxidation complex subunit alpha.